Consider the following 433-residue polypeptide: Glutamyl-tRNA reductase (433 aa).

Substrate is bound by residues 49 to 52, Ser-114, 119 to 121, and Gln-125; these read TCNR and EPQ. Cys-50 functions as the Nucleophile in the catalytic mechanism. 201–206 contacts NADP(+); sequence GAGETI.

Belongs to the glutamyl-tRNA reductase family. Homodimer.

The enzyme catalyses (S)-4-amino-5-oxopentanoate + tRNA(Glu) + NADP(+) = L-glutamyl-tRNA(Glu) + NADPH + H(+). The protein operates within porphyrin-containing compound metabolism; protoporphyrin-IX biosynthesis; 5-aminolevulinate from L-glutamyl-tRNA(Glu): step 1/2. Its function is as follows. Catalyzes the NADPH-dependent reduction of glutamyl-tRNA(Glu) to glutamate 1-semialdehyde (GSA). The sequence is that of Glutamyl-tRNA reductase from Histophilus somni (strain 129Pt) (Haemophilus somnus).